A 344-amino-acid chain; its full sequence is Methionine import ATP-binding protein MetN 1 (344 aa).

The region spanning Ile2–Ile241 is the ABC transporter domain. Residue Gly38–Ser45 coordinates ATP.

The protein belongs to the ABC transporter superfamily. Methionine importer (TC 3.A.1.24) family. As to quaternary structure, the complex is composed of two ATP-binding proteins (MetN), two transmembrane proteins (MetI) and a solute-binding protein (MetQ).

Its subcellular location is the cell inner membrane. The enzyme catalyses L-methionine(out) + ATP + H2O = L-methionine(in) + ADP + phosphate + H(+). It catalyses the reaction D-methionine(out) + ATP + H2O = D-methionine(in) + ADP + phosphate + H(+). In terms of biological role, part of the ABC transporter complex MetNIQ involved in methionine import. Responsible for energy coupling to the transport system. The protein is Methionine import ATP-binding protein MetN 1 of Burkholderia mallei (strain ATCC 23344).